Consider the following 360-residue polypeptide: Histidinol-phosphate aminotransferase (360 aa).

The residue at position 223 (Lys223) is an N6-(pyridoxal phosphate)lysine.

It belongs to the class-II pyridoxal-phosphate-dependent aminotransferase family. Histidinol-phosphate aminotransferase subfamily. As to quaternary structure, homodimer. Requires pyridoxal 5'-phosphate as cofactor.

It carries out the reaction L-histidinol phosphate + 2-oxoglutarate = 3-(imidazol-4-yl)-2-oxopropyl phosphate + L-glutamate. Its pathway is amino-acid biosynthesis; L-histidine biosynthesis; L-histidine from 5-phospho-alpha-D-ribose 1-diphosphate: step 7/9. This Bacillus subtilis (strain 168) protein is Histidinol-phosphate aminotransferase (hisC).